The primary structure comprises 303 residues: tRNA pseudouridine synthase B (303 aa).

Aspartate 47 acts as the Nucleophile in catalysis.

The protein belongs to the pseudouridine synthase TruB family. Type 1 subfamily.

It carries out the reaction uridine(55) in tRNA = pseudouridine(55) in tRNA. Responsible for synthesis of pseudouridine from uracil-55 in the psi GC loop of transfer RNAs. The sequence is that of tRNA pseudouridine synthase B from Legionella pneumophila subsp. pneumophila (strain Philadelphia 1 / ATCC 33152 / DSM 7513).